We begin with the raw amino-acid sequence, 286 residues long: Cytochrome bo(3) ubiquinol oxidase subunit 2 (286 aa).

A signal peptide spans 1 to 24; it reads MQFIKYKSYILKFLLVSCIFCING. Cysteine 25 carries the N-palmitoyl cysteine lipid modification. A lipid anchor (S-diacylglycerol cysteine) is attached at cysteine 25. The Extracellular portion of the chain corresponds to 25–44; that stretch reads CDCTILCPNGLIAQEQRFVL. The helical transmembrane segment at 45–67 threads the bilayer; it reads FVSFFTMLLIIIPVIFMTIFFVL. Over 68–85 the chain is Cytoplasmic; that stretch reads RYRESNFSKTYDPKWSHS. Residues 86–108 traverse the membrane as a helical segment; sequence NIIELLIWGIPIIIIVFLSIFSW. Residues 109–286 are Extracellular-facing; that stretch reads KSVHDLDPKK…VIANVLKISL (178 aa).

It belongs to the cytochrome c oxidase subunit 2 family. Heterooctamer of two A chains, two B chains, two C chains and two D chains.

It localises to the cell membrane. Its function is as follows. Cytochrome bo(3) ubiquinol terminal oxidase is the component of the aerobic respiratory chain of E.coli that predominates when cells are grown at high aeration. Has proton pump activity across the membrane in addition to electron transfer, pumping 2 protons/electron. The sequence is that of Cytochrome bo(3) ubiquinol oxidase subunit 2 (cyoA) from Buchnera aphidicola subsp. Baizongia pistaciae (strain Bp).